The primary structure comprises 355 residues: Protein RecA (355 aa).

Residue 67-74 coordinates ATP; the sequence is GPESSGKT.

The protein belongs to the RecA family.

The protein resides in the cytoplasm. In terms of biological role, can catalyze the hydrolysis of ATP in the presence of single-stranded DNA, the ATP-dependent uptake of single-stranded DNA by duplex DNA, and the ATP-dependent hybridization of homologous single-stranded DNAs. It interacts with LexA causing its activation and leading to its autocatalytic cleavage. This Shewanella baltica (strain OS223) protein is Protein RecA.